Reading from the N-terminus, the 901-residue chain is HTH-type transcriptional regulator MalT (901 aa).

ATP is bound at residue 39-46; the sequence is SPAGYGKT. Positions 829-894 constitute an HTH luxR-type domain; sequence ELIRTSPLTQ…DAVQHAQQLL (66 aa). Positions 853–872 form a DNA-binding region, H-T-H motif; the sequence is NEQIAGELEVAATTIKTHIR.

Belongs to the MalT family. As to quaternary structure, monomer in solution. Oligomerizes to an active state in the presence of the positive effectors ATP and maltotriose.

With respect to regulation, activated by ATP and maltotriose, which are both required for DNA binding. Its function is as follows. Positively regulates the transcription of the maltose regulon whose gene products are responsible for uptake and catabolism of malto-oligosaccharides. Specifically binds to the promoter region of its target genes, recognizing a short DNA motif called the MalT box. The sequence is that of HTH-type transcriptional regulator MalT from Escherichia coli (strain K12 / MC4100 / BW2952).